Reading from the N-terminus, the 1513-residue chain is DNA topoisomerase 2-binding protein 1-A (1513 aa).

BRCT domains are found at residues 101–189 (VYNM…YSDV) and 194–283 (YLCP…MYKI). Positions 289 to 308 (IKSVPDTSTPTGGNSKPNSR) are disordered. BRCT domains are found at residues 354–444 (APDD…IYFH), 530–621 (ADTS…SNAL), and 629–726 (EGST…SYLV). Residues 789–799 (QHNKNPQTSGG) are compositionally biased toward polar residues. Residues 789 to 809 (QHNKNPQTSGGESKVLQREPS) form a disordered region. A Nuclear localization signal motif is present at residues 844–850 (PNQKNRT). Positions 892 to 984 (DNSKLLINVV…KRVPEALYPH (93 aa)) constitute a BRCT 6 domain. 2 disordered regions span residues 1031–1053 (ETSD…SKDV) and 1086–1109 (SVGR…RNGR). Ser-1131 carries the post-translational modification Phosphoserine. BRCT domains follow at residues 1253 to 1344 (SKEE…DYEW) and 1383 to 1480 (IAEG…NYCL). Positions 1508–1511 (KRSR) match the Nuclear localization signal motif.

It belongs to the TOPBP1 family. In terms of assembly, interacts with cdc45. Interacts (via BRCT domains) with ticrr; interaction is cdk2-dependent. Interacts with atr in the presence of atrip. Interacts with recql4 (via N-terminus). Interacts with gmnc. Interacts with cip2a; forming the CIP2A-TOPBP1 complex. Post-translationally, phosphorylation at Ser-1131 is essential for phosphorylation of chek1, and thus for checkpoint regulation.

The protein resides in the nucleus. It localises to the chromosome. Its subcellular location is the cytoplasm. It is found in the cytoskeleton. The protein localises to the microtubule organizing center. The protein resides in the centrosome. It localises to the spindle pole. In terms of biological role, scaffold protein that acts as a key protein-protein adapter in DNA replication and DNA repair. Composed of multiple BRCT domains, which specifically recognize and bind phosphorylated proteins, bringing proteins together into functional combinations. Required for DNA replication initiation but not for the formation of pre-replicative complexes or the elongation stages. Necessary for the loading of replication factors onto chromatin, including gmnc, cdc45, DNA polymerases and components of the GINS complex such as ginsl/sld5. Plays a central role in DNA repair by bridging proteins and promoting recruitment of proteins to DNA damage sites. Involved in double-strand break (DSB) repair via homologous recombination in S-phase by promoting the exchange between the DNA replication factor A (RPA) complex and RAD51. Involved in microhomology-mediated end-joining (MMEJ) DNA repair by promoting recruitment of polymerase theta (POLQ) to DNA damage sites during mitosis. In response to DNA damage, triggers the recruitment of checkpoint signaling proteins on chromatin, which activate the chek1 signaling pathway and block S-phase progression. Increases the kinase activity of atr to numerous substrates, and is required for the phosphorylation of Rad1. Together with cip2a, plays an essential role in the response to genome instability generated by the presence of acentric chromosome fragments derived from shattered chromosomes within micronuclei. The CIP2A-TOPBP1 complex tethers chromosome fragments during mitosis to ensure clustered segregation of the fragments to a single daughter cell nucleus, facilitating re-ligation with limited chromosome scattering and loss. This chain is DNA topoisomerase 2-binding protein 1-A (topbp1-A), found in Xenopus laevis (African clawed frog).